Reading from the N-terminus, the 1058-residue chain is Carbamoyl phosphate synthase large chain (1058 aa).

Residues 1–401 (MPKRTDIKKI…SLLKACRSLE (401 aa)) are carboxyphosphate synthetic domain. The ATP site is built by arginine 129, arginine 169, glycine 175, glycine 176, lysine 208, isoleucine 210, glutamate 215, glycine 241, isoleucine 242, histidine 243, glutamine 284, and glutamate 298. The ATP-grasp 1 domain occupies 133–327 (KALMKALKQP…IAKIAAKIAI (195 aa)). The Mg(2+) site is built by glutamine 284, glutamate 298, and asparagine 300. Mn(2+)-binding residues include glutamine 284, glutamate 298, and asparagine 300. Residues 402 to 546 (IGIYHNECKE…YSTYAFENES (145 aa)) form an oligomerization domain region. Residues 547-929 (QASPNKSILV…ALYKAFEASY (383 aa)) form a carbamoyl phosphate synthetic domain region. Residues 671–861 (EKALHDINIP…MAQVATKLIL (191 aa)) enclose the ATP-grasp 2 domain. Positions 707, 746, 748, 752, 777, 778, 779, 780, 820, and 832 each coordinate ATP. 3 residues coordinate Mg(2+): glutamine 820, glutamate 832, and asparagine 834. Residues glutamine 820, glutamate 832, and asparagine 834 each coordinate Mn(2+). The MGS-like domain occupies 930–1058 (MHVPDFGNII…ESRSFSIQSL (129 aa)). Residues 930 to 1058 (MHVPDFGNII…ESRSFSIQSL (129 aa)) form an allosteric domain region.

This sequence belongs to the CarB family. As to quaternary structure, composed of two chains; the small (or glutamine) chain promotes the hydrolysis of glutamine to ammonia, which is used by the large (or ammonia) chain to synthesize carbamoyl phosphate. Tetramer of heterodimers (alpha,beta)4. It depends on Mg(2+) as a cofactor. The cofactor is Mn(2+).

The catalysed reaction is hydrogencarbonate + L-glutamine + 2 ATP + H2O = carbamoyl phosphate + L-glutamate + 2 ADP + phosphate + 2 H(+). The enzyme catalyses hydrogencarbonate + NH4(+) + 2 ATP = carbamoyl phosphate + 2 ADP + phosphate + 2 H(+). Its pathway is amino-acid biosynthesis; L-arginine biosynthesis; carbamoyl phosphate from bicarbonate: step 1/1. The protein operates within pyrimidine metabolism; UMP biosynthesis via de novo pathway; (S)-dihydroorotate from bicarbonate: step 1/3. Functionally, large subunit of the glutamine-dependent carbamoyl phosphate synthetase (CPSase). CPSase catalyzes the formation of carbamoyl phosphate from the ammonia moiety of glutamine, carbonate, and phosphate donated by ATP, constituting the first step of 2 biosynthetic pathways, one leading to arginine and/or urea and the other to pyrimidine nucleotides. The large subunit (synthetase) binds the substrates ammonia (free or transferred from glutamine from the small subunit), hydrogencarbonate and ATP and carries out an ATP-coupled ligase reaction, activating hydrogencarbonate by forming carboxy phosphate which reacts with ammonia to form carbamoyl phosphate. The chain is Carbamoyl phosphate synthase large chain from Streptococcus uberis (strain ATCC BAA-854 / 0140J).